Consider the following 68-residue polypeptide: MARITVDDCLDRIQNRFDLTLAAAYRARQVASGASAFVEPGRHKPTVIALREIAAGHVGKEVLNRGKA.

The protein belongs to the RNA polymerase subunit omega family. The RNAP catalytic core consists of 2 alpha, 1 beta, 1 beta' and 1 omega subunit. When a sigma factor is associated with the core the holoenzyme is formed, which can initiate transcription.

The catalysed reaction is RNA(n) + a ribonucleoside 5'-triphosphate = RNA(n+1) + diphosphate. Its function is as follows. Promotes RNA polymerase assembly. Latches the N- and C-terminal regions of the beta' subunit thereby facilitating its interaction with the beta and alpha subunits. This chain is DNA-directed RNA polymerase subunit omega, found in Chromobacterium violaceum (strain ATCC 12472 / DSM 30191 / JCM 1249 / CCUG 213 / NBRC 12614 / NCIMB 9131 / NCTC 9757 / MK).